We begin with the raw amino-acid sequence, 327 residues long: MNLTPTTPVDDDNTEPGPFIELSRESWAVLSDSTEIDIDEATLDHIRGLGDPTSHRDVVEVYRPLTQLIHLYCMHTGALFDASNNFLQLTRHGMKRTPFVIGIAGSVAVGKSTVARLLRELLGRSPRRPVVDLVTTDGFLYPNRVLEERELLSRKGFPESYDRKALLRFVVDVKSGMPEVTAPVYSHVTYDIVPNQQLVVRQPDILIIEGLNVLQPPRRRSSGTMGLALSDFFDFSVYVDAEEADIIRWYINRFLTLRQTAFTDPHSFFGEYARMPDNEAITIAKEIWDTINGPNLVQNVLPTRGRATAILHKGPDHEVRNVWIRKV.

Residue 105-112 (GSVAVGKS) participates in ATP binding.

This sequence belongs to the prokaryotic pantothenate kinase family.

It localises to the cytoplasm. The enzyme catalyses (R)-pantothenate + ATP = (R)-4'-phosphopantothenate + ADP + H(+). The protein operates within cofactor biosynthesis; coenzyme A biosynthesis; CoA from (R)-pantothenate: step 1/5. The chain is Pantothenate kinase from Cutibacterium acnes (strain DSM 16379 / KPA171202) (Propionibacterium acnes).